The following is a 195-amino-acid chain: Protein GrpE (195 aa).

This sequence belongs to the GrpE family. As to quaternary structure, homodimer.

The protein localises to the cytoplasm. Its function is as follows. Participates actively in the response to hyperosmotic and heat shock by preventing the aggregation of stress-denatured proteins, in association with DnaK and GrpE. It is the nucleotide exchange factor for DnaK and may function as a thermosensor. Unfolded proteins bind initially to DnaJ; upon interaction with the DnaJ-bound protein, DnaK hydrolyzes its bound ATP, resulting in the formation of a stable complex. GrpE releases ADP from DnaK; ATP binding to DnaK triggers the release of the substrate protein, thus completing the reaction cycle. Several rounds of ATP-dependent interactions between DnaJ, DnaK and GrpE are required for fully efficient folding. The polypeptide is Protein GrpE (Blochmanniella floridana).